Consider the following 94-residue polypeptide: ESAT-6-like protein EsxL (94 aa).

The protein belongs to the WXG100 family. ESAT-6 subfamily. In terms of assembly, strongly interacts with EsxK to form a heterodimeric complex under reducing conditions. The complex is regulated by the redox state of EsxL.

The protein resides in the secreted. In terms of biological role, induces apoptosis of host cells. Is immunogenic with highly specific seroreactivity towards TB patients' serum. The polypeptide is ESAT-6-like protein EsxL (Mycobacterium tuberculosis (strain ATCC 25618 / H37Rv)).